The chain runs to 348 residues: Ileal sodium/bile acid cotransporter (348 aa).

Residues 1–28 lie on the Extracellular side of the membrane; the sequence is MNDPNSCVDNATVCSGASCVVPESNFNN. Asparagine 10 carries N-linked (GlcNAc...) asparagine glycosylation. A helical transmembrane segment spans residues 29-49; sequence ILSVVLSTVLTILLALVMFSM. Residues 50-82 are Cytoplasmic-facing; sequence GCNVEIKKFLGHIKRPWGICVGFLCQFGIMPLT. A helical transmembrane segment spans residues 83–103; the sequence is GFILSVAFDILPLQAVVVLII. Residues 104-126 are Extracellular-facing; it reads GCCPGGTASNILAYWVDGDMDLS. The chain crosses the membrane as a helical span at residues 127 to 147; the sequence is VSMTTCSTLLALGMMPLCLLI. Topologically, residues 148 to 157 are cytoplasmic; that stretch reads YTKMWVDSGS. Residues 158-178 traverse the membrane as a helical segment; sequence IVIPYDNIGTSLVSLVVPVSI. The Extracellular portion of the chain corresponds to 179–195; the sequence is GMFVNHKWPQKAKIILK. Residues 196-216 form a helical membrane-spanning segment; it reads IGSIAGAILIVLIAVVGGILY. At 217 to 224 the chain is on the cytoplasmic side; sequence QSAWIIAP. The chain crosses the membrane as a helical span at residues 225-245; the sequence is KLWIIGTIFPVAGYSLGFLLA. Over 246-284 the chain is Extracellular; sequence RIAGLPWYRCRTVAFETGMQNTQLCSTIVQLSFTPEELN. A helical transmembrane segment spans residues 285 to 305; the sequence is VVFTFPLIYSIFQLAFAAIFL. Topologically, residues 306 to 348 are cytoplasmic; the sequence is GFYVAYKKCHGKNKAEIPESKENGTEPESSFYKANGGFQPDEK. Over residues 320 to 329 the composition is skewed to basic and acidic residues; it reads AEIPESKENG. The segment at 320-348 is disordered; sequence AEIPESKENGTEPESSFYKANGGFQPDEK. Serine 335 carries the post-translational modification Phosphoserine.

It belongs to the bile acid:sodium symporter (BASS) (TC 2.A.28) family. Monomer and homodimer. As to expression, mainly expressed in ileum and kidney, lower expression in cecum.

Its subcellular location is the membrane. The catalysed reaction is taurocholate(out) + 2 Na(+)(out) = taurocholate(in) + 2 Na(+)(in). It carries out the reaction cholate(out) + 2 Na(+)(out) = cholate(in) + 2 Na(+)(in). It catalyses the reaction taurochenodeoxycholate(out) + 2 Na(+)(out) = taurochenodeoxycholate(in) + 2 Na(+)(in). The enzyme catalyses tauroursodeoxycholate(out) + 2 Na(+)(out) = tauroursodeoxycholate(in) + 2 Na(+)(in). The catalysed reaction is glycocholate(out) + 2 Na(+)(out) = glycocholate(in) + 2 Na(+)(in). It carries out the reaction tauronorcholate(out) + 2 Na(+)(out) = tauronorcholate(in) + 2 Na(+)(in). It catalyses the reaction tauroallocholate(out) + 2 Na(+)(out) = tauroallocholate(in) + 2 Na(+)(in). The enzyme catalyses taurodeoxycholate(out) + 2 Na(+)(out) = taurodeoxycholate(in) + 2 Na(+)(in). The catalysed reaction is tauro-beta-muricholate(out) + 2 Na(+)(out) = tauro-beta-muricholate(in) + 2 Na(+)(in). Plays a critical role in the sodium-dependent reabsorption of bile acids from the lumen of the small intestine. Transports various bile acids, unconjugated or conjugated, such as cholate and taurocholate. Also responsible for bile acid transport in the renal proximal tubules, a salvage mechanism that helps conserve bile acids. Works collaboratively with the Na(+)-taurocholate cotransporting polypeptide (NTCP), the organic solute transporter (OST), and the bile salt export pump (BSEP), to ensure efficacious biological recycling of bile acids during enterohepatic circulation. The protein is Ileal sodium/bile acid cotransporter (SLC10A2) of Homo sapiens (Human).